The sequence spans 726 residues: Endo-1,4-beta-xylanase/feruloyl esterase (726 aa).

The first 19 residues, M1–A19, serve as a signal peptide directing secretion. A GH10 domain is found at Y27 to F369. E161 serves as the catalytic Proton donor; for xylanase activity. E280 acts as the Nucleophile; for xylanase activity in catalysis. A feruloyl esterase region spans residues D370–K726. The active-site Nucleophile; for esterase activity is S629.

It in the N-terminal section; belongs to the glycosyl hydrolase 10 (cellulase F) family. Monomer or homodimer.

The catalysed reaction is Endohydrolysis of (1-&gt;4)-beta-D-xylosidic linkages in xylans.. It carries out the reaction feruloyl-polysaccharide + H2O = ferulate + polysaccharide.. It participates in glycan degradation; xylan degradation. Functionally, involved in degradation of plant cell wall polysaccharides. Has endo-xylanase activity towards substrates such as oat spelt xylan (OSX), acetylated xylo-oligosaccharides and acetylated xylan, producing primarily xylobiose; cannot hydrolyze xylobiose to xylose. Also has feruloyl esterase activity, releasing ferulic acid from methylferulate, and from the more natural substrates wheat bran, corn fiber, and XOS(FA,Ac), a corn fiber-derived substrate enriched in O-acetyl and ferulic acid esters. Exhibits negligible acetyl esterase activity on sugar acetates. Acts synergistically with Xyl3A to increase the release of xylose from xylan. Does not possess endoglucanase or mannanase activities since it is not able to hydrolyze carboxymethyl cellulose and locust bean gum. The polypeptide is Endo-1,4-beta-xylanase/feruloyl esterase (Xylanibacter ruminicola (strain ATCC 19189 / DSM 19721 / CIP 105475 / JCM 8958 / 23) (Prevotella ruminicola)).